Reading from the N-terminus, the 429-residue chain is MKKQRNLRSMAAQAVEQVVEQGQSLSNILPPLQQKVSDKDKALLQELCFGVLRTLSQLDWLINKLMARPMTGKQRTVHYLIMVGLYQLLYTRIPPHAALAETVEGAIAIKRPQLKGLINGVLRQFQRRQEELLAEFNTRDARYLHPSWLLKRLQKAYPEQWQSIAEANNQRPPMWLRINRTHHSRDSWLALLDEAGMKGFPHADYPDAVRLETPAPVHALPGFEDGWVTVQDASAQGCMTWLAPQNGEHILDLCAAPGGKTTHILEVAPEAQVVAVDIDEQRLSRVYDNLKRLGMKATVKQGDGRYPSQWCGEQQFDRILLDAPCSATGVIRRHPDIKWLRRDRDIPELAQLQSEILDAIWPHLKSGGTLVYATCSVLPEENSLQIKAFLQRTADAELCETGTPEQPGKQNQPGAEEGDGFFYAKLIKK.

S-adenosyl-L-methionine-binding positions include 254-260 (CAAPGGK), aspartate 277, aspartate 303, and aspartate 322. The active-site Nucleophile is cysteine 375.

The protein belongs to the class I-like SAM-binding methyltransferase superfamily. RsmB/NOP family.

The protein resides in the cytoplasm. It catalyses the reaction cytidine(967) in 16S rRNA + S-adenosyl-L-methionine = 5-methylcytidine(967) in 16S rRNA + S-adenosyl-L-homocysteine + H(+). Specifically methylates the cytosine at position 967 (m5C967) of 16S rRNA. The protein is Ribosomal RNA small subunit methyltransferase B of Shigella flexneri serotype 5b (strain 8401).